The sequence spans 233 residues: Cobalt-containing nitrile hydratase subunit beta (233 aa).

Belongs to the nitrile hydratase subunit beta family. In terms of assembly, heterotetramer of two alpha and two beta chains.

The enzyme catalyses an aliphatic primary amide = an aliphatic nitrile + H2O. Functionally, NHase catalyzes the hydration of various nitrile compounds to the corresponding amides. The sequence is that of Cobalt-containing nitrile hydratase subunit beta from Pseudonocardia thermophila.